Here is a 65-residue protein sequence, read N- to C-terminus: Beta-mammal toxin Tma1 (65 aa).

One can recognise an LCN-type CS-alpha/beta domain in the interval 2 to 64 (KEGYLVGNDG…TWNSAKNRCG (63 aa)). Cystine bridges form between Cys-12/Cys-63, Cys-16/Cys-38, Cys-24/Cys-44, and Cys-28/Cys-46.

The protein belongs to the long (4 C-C) scorpion toxin superfamily. Sodium channel inhibitor family. In terms of tissue distribution, expressed by the venom gland.

It is found in the secreted. Functionally, beta toxins bind voltage-independently at site-4 of sodium channels (Nav) and shift the voltage of activation toward more negative potentials thereby affecting sodium channel activation and promoting spontaneous and repetitive firing. This toxin acts on human Nav1.4/SCN4A and Nav1.6/SCN8A voltage-gated sodium channels. The protein is Beta-mammal toxin Tma1 of Tityus macrochirus (Scorpion).